Reading from the N-terminus, the 583-residue chain is Aspartate--tRNA ligase (583 aa).

Glu174 serves as a coordination point for L-aspartate. An aspartate region spans residues 198–201 (QITK). Arg220 serves as a coordination point for L-aspartate. Residues 220 to 222 (RDE) and Gln229 each bind ATP. His443 is a binding site for L-aspartate. Glu477 is an ATP binding site. L-aspartate is bound at residue Arg484. Residue 529-532 (GLDR) participates in ATP binding.

This sequence belongs to the class-II aminoacyl-tRNA synthetase family. Type 1 subfamily. In terms of assembly, homodimer.

The protein resides in the cytoplasm. The enzyme catalyses tRNA(Asp) + L-aspartate + ATP = L-aspartyl-tRNA(Asp) + AMP + diphosphate. Its function is as follows. Catalyzes the attachment of L-aspartate to tRNA(Asp) in a two-step reaction: L-aspartate is first activated by ATP to form Asp-AMP and then transferred to the acceptor end of tRNA(Asp). This is Aspartate--tRNA ligase from Streptococcus suis (strain 98HAH33).